The sequence spans 146 residues: Leghemoglobin 49 (146 aa).

Residues 2-146 (GFTQQQEALV…LATAIKKAMS (145 aa)) enclose the Globin domain. Nitrated tyrosine is present on residues Tyr24 and Tyr29. Heme b is bound at residue Ser44. Residue Ser44 is modified to Phosphoserine. His61 provides a ligand contact to O2. Residues His93 and Lys96 each coordinate heme b. Tyr134 carries the post-translational modification Nitrated tyrosine.

It belongs to the plant globin family. Monomer. Nitrated in effective nodules and particularly in hypoxic conditions; this mechanism may play a protective role in the symbiosis by buffering toxic peroxynitrite NO(2)(-). Nitration level decrease during nodule senescence. In terms of processing, phosphorylation at Ser-44 disrupts the molecular environment of its porphyrin ring oxygen binding pocket, thus leading to a reduced oxygen consumption and to the delivery of oxygen O(2) to symbiosomes. As to expression, accumulates in root nodules after inoculation by bacteria of the genus Rhizobium.

It is found in the cytoplasm. Its subcellular location is the cytosol. The protein localises to the nucleus. Its function is as follows. Leghemoglobin that reversibly binds oxygen O(2) through a pentacoordinated heme iron. In root nodules, facilitates the diffusion of oxygen to the bacteroids while preventing the bacterial nitrogenase from being inactivated by buffering dioxygen, nitric oxide and carbon monoxide, and promoting the formation of reactive oxygen species (ROS, e.g. H(2)O(2)). This role is essential for symbiotic nitrogen fixation (SNF). The protein is Leghemoglobin 49 of Vicia faba (Broad bean).